The chain runs to 414 residues: Tryptophan synthase beta chain (414 aa).

Lys108 carries the post-translational modification N6-(pyridoxal phosphate)lysine.

This sequence belongs to the TrpB family. In terms of assembly, tetramer of two alpha and two beta chains. Pyridoxal 5'-phosphate serves as cofactor.

It catalyses the reaction (1S,2R)-1-C-(indol-3-yl)glycerol 3-phosphate + L-serine = D-glyceraldehyde 3-phosphate + L-tryptophan + H2O. The protein operates within amino-acid biosynthesis; L-tryptophan biosynthesis; L-tryptophan from chorismate: step 5/5. Functionally, the beta subunit is responsible for the synthesis of L-tryptophan from indole and L-serine. This chain is Tryptophan synthase beta chain, found in Beijerinckia indica subsp. indica (strain ATCC 9039 / DSM 1715 / NCIMB 8712).